Reading from the N-terminus, the 293-residue chain is MTVAITQTGPALQEFVERHQRLFVLSGAGCSTDSGIPDYRDLQGGWKRPQPVTFQAFMGELSTRQRYWARSLVGWPRFGLARPNATHHALAALEARGQLELLLTQNVDRLHQAAGSQAVIDLHGRLDVVRCMGCEQRMPRTEFQLLLERDNPGWADLEAAQAPDGDADLDNVAFDNFVVPACPACGGVLKPDVVFFGENVPRERVERAFAHLQAADAVLVVGSSLMVYSGFRFVQAAARAGLPIAALNFGRTRADDLLSLKVEQSCAQALAFLQQPPDPLHTATARYHSARSA.

The Deacetylase sirtuin-type domain occupies methionine 1–threonine 284. Residues glycine 27 to lysine 47 and glutamine 105 to aspartate 108 contribute to the NAD(+) site. Histidine 123 functions as the Proton acceptor in the catalytic mechanism. Zn(2+) is bound by residues cysteine 131, cysteine 134, cysteine 182, and cysteine 185. Residues glycine 222–serine 224, asparagine 248–glycine 250, and cysteine 266 each bind NAD(+).

This sequence belongs to the sirtuin family. Class II subfamily. It depends on Zn(2+) as a cofactor.

The protein localises to the cytoplasm. It carries out the reaction N(6)-acetyl-L-lysyl-[protein] + NAD(+) + H2O = 2''-O-acetyl-ADP-D-ribose + nicotinamide + L-lysyl-[protein]. NAD-dependent protein deacetylase which modulates the activities of several enzymes which are inactive in their acetylated form. In Xanthomonas campestris pv. campestris (strain 8004), this protein is NAD-dependent protein deacetylase.